The following is a 144-amino-acid chain: Maximins 6/H10 (144 aa).

The N-terminal stretch at 1-18 (MNFKYIVAVSFLIASAYA) is a signal peptide. Residues 19–43 (RSVKNDEQSLSQRDVLDEESLREIR) constitute a propeptide that is removed on maturation. Asparagine amide is present on Asn70. Residues 74–123 (TAEDHEVMKRLEAVMRDLDSLDHPEEASERETRGFNQEEIANRFTKKEKR) constitute a propeptide that is removed on maturation. Position 143 is a leucine amide (Leu143).

It belongs to the bombinin family. In terms of tissue distribution, expressed by the skin glands.

It is found in the secreted. Functionally, maximin-6 shows antimicrobial activity against bacteria and against the fungus C.albicans. It has little hemolytic activity. In terms of biological role, maximin-H10 shows antimicrobial activity against bacteria and against the fungus C.albicans. Shows strong hemolytic activity. The protein is Maximins 6/H10 of Bombina maxima (Giant fire-bellied toad).